The primary structure comprises 1118 residues: Constitutive coactivator of PPAR-gamma-like protein 1 (1118 aa).

An interaction with YES1, SRC and FYN region spans residues 339–405 (PPHYLAARPG…SLSEPAPLTL (67 aa)). Residues 374-533 (AKPVAPQVPS…GTVQPIPCLL (160 aa)) are disordered. Residues 376–396 (PVAPQVPSPGGAPGQGPYPYS) show a composition bias toward low complexity. Polar residues-rich tracts occupy residues 405–420 (LDTS…SYSN) and 435–447 (SPIN…SPNH). Residues 481–502 (GWEKTGSHSEPQARGDPGDQTK) show a composition bias toward basic and acidic residues. Residues 503 to 514 (AEGSSTASSGSQ) show a composition bias toward polar residues. A Phosphothreonine modification is found at threonine 655. The RNA binding stretch occupies residues 829-1118 (ADQAAKVEKM…LEAAVLNKEE (290 aa)). Omega-N-methylarginine occurs at positions 873, 884, and 886. The segment at 921–945 (AFSGSDSSRTSKSQGGVQPIPSQGG) is disordered. Residues 924-936 (GSDSSRTSKSQGG) are compositionally biased toward polar residues. Position 932 is an N6-acetyllysine (lysine 932). At serine 960 the chain carries Phosphoserine. Omega-N-methylarginine is present on residues arginine 982 and arginine 986. Serine 1023 is modified (phosphoserine). The disordered stretch occupies residues 1025 to 1102 (EEVAKELKSK…HLNALSTDSA (78 aa)). Over residues 1026 to 1037 (EVAKELKSKSGE) the composition is skewed to basic and acidic residues. Low complexity predominate over residues 1038-1051 (SKSSAMSSDGSLAE). Residues serine 1044, serine 1045, and serine 1048 each carry the phosphoserine modification. Positions 1076-1101 (HSESALNNDSKTCNTNPHLNALSTDS) are enriched in polar residues.

The protein belongs to the constitutive coactivator of PPAR-gamma family. As to quaternary structure, interacts with PURA. Interacts with SRC family protein kinases YES1, SRC and FYN. Upon tyrosine phosphorylation, interacts with PIK3R1. Interacts with IGF2BP1/IMP-1 in an RNA-dependent manner. In terms of processing, arg-982 is dimethylated, probably to asymmetric dimethylarginine. Phosphorylated on tyrosine by SRC family protein kinases upon oxidative stress, for instance following UV irradiation. Widely expressed. In gastric mucosa, detected in the bottom region of the foveolar epithelium (at protein level).

It is found in the cytoplasm. It localises to the cell membrane. Component of the oxidative stress-induced survival signaling. May regulate the activation of SRC family protein kinases. May act as a scaffolding protein enabling SRC family protein kinases to phosphorylate and activate PI3-kinase. Binds IGF2 RNA and promotes the production of IGF2 protein. In Homo sapiens (Human), this protein is Constitutive coactivator of PPAR-gamma-like protein 1 (FAM120A).